The following is a 181-amino-acid chain: Bradykinin potentiating and C-type natriuretic peptides (181 aa).

The signal sequence occupies residues methionine 1–glycine 23. A propeptide spanning residues lysine 24–glutamine 27 is cleaved from the precursor. Pyrrolidone carboxylic acid occurs at positions 28 and 31. The propeptide occupies leucine 41–valine 43. Position 44 is a pyrrolidone carboxylic acid (glutamine 44). Positions threonine 50–leucine 52 are excised as a propeptide. Glutamine 53 is subject to Pyrrolidone carboxylic acid. Residues alanine 59–lysine 159 constitute a propeptide that is removed on maturation. The interval glutamate 74–alanine 150 is disordered. The span at serine 104–serine 114 shows a compositional bias: low complexity. Residues alanine 140 to alanine 150 are compositionally biased toward gly residues. Residues cysteine 165 and cysteine 181 are joined by a disulfide bond.

The protein in the N-terminal section; belongs to the bradykinin-potentiating peptide family. It in the C-terminal section; belongs to the natriuretic peptide family. Venom gland.

The protein resides in the secreted. Functionally, bradykinin-potentiating peptide both inhibits the activity of the angiotensin-converting enzyme (ACE) and enhances the action of bradykinin by inhibiting the peptidases that inactivate it. It acts as an indirect hypotensive agent. Synthetic Cdt1a, Cdt1b and the short hexapeptide Cdt3 are able to potentiate the hypotensive effect mediated by Bk on the blood pressure of anesthetized rats. Has a vasorelaxant activity in rat aortic strips and a diuretic potency in anesthetized rats. May act by activating natriuretic receptors (NPR1 and/or NPR2). In Crotalus durissus terrificus (South American rattlesnake), this protein is Bradykinin potentiating and C-type natriuretic peptides.